A 470-amino-acid polypeptide reads, in one-letter code: MSANIGKIVQVIGAVVDVEFPSGQLPNILNALDIKNPNNTDAPDLVCEVAQHLGDNIVRTIAMDATEGLVRGMEASDTGKPIMVPVGKASLGRIMNVVGRPVDELGPINADKSLPIHRAAPEFTEQNTKVELLETGIKVVDLLIPFPKGGKMGLFGGAGVGKTVILMEMINNIAKQHGGISVFAGVGERTREGNDLYHEMKDAGVLEKAALIYGQMNEPPGARARVALTALACAEYFRDVENQDVLLFVDNIFRFTQAGSEVSALLGRMPSAVGYQPTLGTDLGALQERITSTTKGSITSVQAVYVPADDLTDPAPATTFSHLDGTLVLSRQIAELGIYPAVDPLDSTSRILDPNVVGVEHYGVARQVQQVLQKYKDLQDIIAILGMDELSDEDKLTVARARRIQRFLSQPFHVAETFTGTPGVYVKLEDTIKGFMGILNGDYDHLAEGDFYMVGGIEMALEKYKKRQEQ.

Residue 156–163 (GGAGVGKT) participates in ATP binding.

The protein belongs to the ATPase alpha/beta chains family. F-type ATPases have 2 components, CF(1) - the catalytic core - and CF(0) - the membrane proton channel. CF(1) has five subunits: alpha(3), beta(3), gamma(1), delta(1), epsilon(1). CF(0) has three main subunits: a(1), b(2) and c(9-12). The alpha and beta chains form an alternating ring which encloses part of the gamma chain. CF(1) is attached to CF(0) by a central stalk formed by the gamma and epsilon chains, while a peripheral stalk is formed by the delta and b chains.

It is found in the cell inner membrane. The enzyme catalyses ATP + H2O + 4 H(+)(in) = ADP + phosphate + 5 H(+)(out). Produces ATP from ADP in the presence of a proton gradient across the membrane. The catalytic sites are hosted primarily by the beta subunits. In Nitratidesulfovibrio vulgaris (strain ATCC 29579 / DSM 644 / CCUG 34227 / NCIMB 8303 / VKM B-1760 / Hildenborough) (Desulfovibrio vulgaris), this protein is ATP synthase subunit beta.